The following is a 486-amino-acid chain: MAHRLLRDAQADGWERSDFPIICESCLGDNPYVRMLRAEYDKECKICARPFTVFRWRPGRDARYKKTEICQTCCKLKNVCQVCLLDLEYGLPVQVRDTALSTNSNDAIPRSDVNREYFAEEHDRRARAGIDYDSSNGKARANDTILKLQRTAPYYKRNRAHVCSFYVRGECTRGAECPYRHEMPETGELSQQNIKDRYYGVNDPVALKLLSKAGEMPSLTPPDDESIRTLYIGGLDSRVTEQDLRDQFYAHGEIETIRMVLQRACAFVTYTTREGAEKAAEELANKLVIKGVRLKLMWGKPQAPKPEEDEAGRQGHVAHGGMLPRAVISQQQSGDQPQPPGMEGQQQPASASYYFNIPAPPAAERTLYPSMDPQRMGALVESQEGDGKPGPQQAGQGQASSSSGQSYPEPPPPYYHGGQYPPYYPPYGGYMPPPRMPYQQPPQYPAYQPMLAPPAQSQASSLQQPAPATQQLGQGPQQQTTQNGMT.

A C3H1-type zinc finger spans residues 157–184 (RNRAHVCSFYVRGECTRGAECPYRHEMP). Positions 228–301 (RTLYIGGLDS…VRLKLMWGKP (74 aa)) constitute an RRM domain. Disordered stretches follow at residues 329–348 (SQQQSGDQPQPPGMEGQQQP) and 379–486 (LVES…NGMT). 2 stretches are compositionally biased toward low complexity: residues 389 to 407 (PGPQQAGQGQASSSSGQSY) and 415 to 430 (YHGGQYPPYYPPYGGY). Residues 431 to 444 (MPPPRMPYQQPPQY) show a composition bias toward pro residues. The span at 445-486 (PAYQPMLAPPAQSQASSLQQPAPATQQLGQGPQQQTTQNGMT) shows a compositional bias: low complexity.

This Oryza sativa subsp. japonica (Rice) protein is Zinc finger CCCH domain-containing protein 49.